Consider the following 683-residue polypeptide: Dynein, 78 kDa intermediate chain, flagellar outer arm (683 aa).

The tract at residues 1 to 42 (MPALSPAKKGTDKGKTGKKTGKQEQNAQDYIPPPPPMPGDEA) is disordered. WD repeat units lie at residues 358 to 398 (HTES…DEPI), 407 to 450 (KLND…LIPE), 562 to 602 (DLND…LLPL), and 608 to 647 (VKKA…RITS).

This sequence belongs to the dynein intermediate chain family. As to quaternary structure, consists of at least 3 heavy chains (alpha, beta and gamma), 2 intermediate chains and 8 light chains.

The protein resides in the cytoplasm. It is found in the cytoskeleton. Its subcellular location is the flagellum axoneme. Functionally, is essential for arm assembly or attachment to the outer doublet microtubule. This Chlamydomonas reinhardtii (Chlamydomonas smithii) protein is Dynein, 78 kDa intermediate chain, flagellar outer arm (ODA9).